The sequence spans 438 residues: V-type ATP synthase beta chain (438 aa).

Belongs to the ATPase alpha/beta chains family.

Functionally, produces ATP from ADP in the presence of a proton gradient across the membrane. The V-type beta chain is a regulatory subunit. The protein is V-type ATP synthase beta chain (atpB) of Chlamydia pneumoniae (Chlamydophila pneumoniae).